Here is a 62-residue protein sequence, read N- to C-terminus: Sperm protamine P1 (62 aa).

A disordered region spans residues 1-62 (MARYRHSRSR…RYSRRRRRRY (62 aa)).

This sequence belongs to the protamine P1 family. Testis.

The protein resides in the nucleus. The protein localises to the chromosome. In terms of biological role, protamines substitute for histones in the chromatin of sperm during the haploid phase of spermatogenesis. They compact sperm DNA into a highly condensed, stable and inactive complex. In Dendrolagus dorianus (Doria's tree-kangaroo), this protein is Sperm protamine P1 (PRM1).